Consider the following 376-residue polypeptide: Chaperone protein DnaJ (376 aa).

In terms of domain architecture, J spans 4–68; that stretch reads DYYDILGVDR…DTRSRYDQFG (65 aa). A CR-type zinc finger spans residues 135–217; it reads GGEKEIRIPH…CNGAGRRQVT (83 aa). Zn(2+) contacts are provided by C148, C151, C165, C168, C191, C194, C205, and C208. 4 CXXCXGXG motif repeats span residues 148–155, 165–172, 191–198, and 205–212; these read CQVCKGDG, CSTCNGQG, CPACNGQG, and CEVCNGAG.

It belongs to the DnaJ family. As to quaternary structure, homodimer. The cofactor is Zn(2+).

It is found in the cytoplasm. Functionally, participates actively in the response to hyperosmotic and heat shock by preventing the aggregation of stress-denatured proteins and by disaggregating proteins, also in an autonomous, DnaK-independent fashion. Unfolded proteins bind initially to DnaJ; upon interaction with the DnaJ-bound protein, DnaK hydrolyzes its bound ATP, resulting in the formation of a stable complex. GrpE releases ADP from DnaK; ATP binding to DnaK triggers the release of the substrate protein, thus completing the reaction cycle. Several rounds of ATP-dependent interactions between DnaJ, DnaK and GrpE are required for fully efficient folding. Also involved, together with DnaK and GrpE, in the DNA replication of plasmids through activation of initiation proteins. This chain is Chaperone protein DnaJ, found in Crocosphaera subtropica (strain ATCC 51142 / BH68) (Cyanothece sp. (strain ATCC 51142)).